The chain runs to 502 residues: MFGTLLLYCFFLATVPALAETGGERQLSPEKSEIWGPGLKADVVLPARYFYIQAVDTSGNKFTSSPGEKVFQVKVSAPEEQFTRVGVQVLDRKDGSFIVRYRMYASYKNLKVEIKFQGQHVAKSPYILKGPVYHENCDCPLQDSAAWLREMNCPETIAQIQRDLAHFPAVDPEKIAVEIPKRFGQRQSLCHYTLKDNKVYIKTHGEHVGFRIFMDAILLSLTRKVKMPDVELFVNLGDWPLEKKKSNSNIHPIFSWCGSTDSKDIVMPTYDLTDSVLETMGRVSLDMMSVQANTGPPWESKNSTAVWRGRDSRKERLELVKLSRKHPELIDAAFTNFFFFKHDENLYGPIVKHISFFDFFKHKYQINIDGTVAAYRLPYLLVGDSVVLKQDSIYYEHFYNELQPWKHYIPVKSNLSDLLEKLKWAKDHDEEAKKIAKAGQEFARNNLMGDDIFCYYFKLFQEYANLQVSEPQIREGMKRVEPQTEDDLFPCTCHRKKTKDEL.

A signal peptide spans 1–19 (MFGTLLLYCFFLATVPALA). Residues 24–130 (ERQLSPEKSE…VAKSPYILKG (107 aa)) form a Filamin repeat. 2 N-linked (GlcNAc...) asparagine glycosylation sites follow: N302 and N414. The short motif at 499–502 (KDEL) is the Prevents secretion from ER element.

Belongs to the KDELC family. N-glycosylated.

The protein localises to the endoplasmic reticulum lumen. It catalyses the reaction L-seryl-[EGF-like domain protein] + UDP-alpha-D-glucose = 3-O-(beta-D-glucosyl)-L-seryl-[EGF-like domain protein] + UDP + H(+). The enzyme catalyses L-seryl-[EGF-like domain protein] + UDP-alpha-D-xylose = 3-O-(beta-D-xylosyl)-L-seryl-[EGF-like domain protein] + UDP + H(+). Its pathway is protein modification; protein glycosylation. Functionally, protein glucosyltransferase that catalyzes the transfer of glucose from UDP-glucose to a serine residue within the consensus sequence peptide C-X-N-T-X-G-S-F-X-C. Can also catalyze the transfer of xylose from UDP-xylose but less efficiently. Specifically targets extracellular EGF repeats of proteins such as NOTCH1, NOTCH3, FBN1, FBN2 and LTBP1. May regulate the transport of NOTCH1 and NOTCH3 to the plasma membrane and thereby the Notch signaling pathway. The sequence is that of Protein O-glucosyltransferase 2 from Homo sapiens (Human).